A 431-amino-acid chain; its full sequence is Serine/threonine-protein kinase Sgk1 (431 aa).

The necessary for localization to the mitochondria stretch occupies residues 1–60 (MTVKAEAARSTLTYSRMRGMVAILIAFMKQRRMGLNDFIQKIASNTYACKHAEVQSILKM). A disordered region spans residues 65 to 92 (EPELMNANPSPPPSPSQQINLGPSSNPH). At serine 74 the chain carries Phosphoserine. The residue at position 78 (serine 78) is a Phosphoserine; by MAPK7. The segment covering 81 to 91 (QQINLGPSSNP) has biased composition (polar residues). The Protein kinase domain maps to 98–355 (FHFLKVIGKG…FMEIKSHIFF (258 aa)). Residues 104 to 112 (IGKGSFGKV) and lysine 127 contribute to the ATP site. Positions 131–141 (KKAILKKKEEK) match the Nuclear localization signal motif. Aspartate 222 acts as the Proton acceptor in catalysis. Threonine 256 carries the post-translational modification Phosphothreonine; by PDPK1. In terms of domain architecture, AGC-kinase C-terminal spans 356–431 (SLINWDDLIN…SYAPPVDSFL (76 aa)). Threonine 369 bears the Phosphothreonine; by PKA mark. Phosphoserine is present on residues serine 397, serine 401, and serine 422.

It belongs to the protein kinase superfamily. AGC Ser/Thr protein kinase family. As to quaternary structure, homodimer; disulfide-linked. Interacts with MAPK3/ERK1, MAPK1/ERK2, MAP2K1/MEK1, MAP2K2/MEK2, NEDD4, NEDD4L, MAPT/TAU, MAPK7, CREB1, SLC9A3R2/NHERF2 and KCNJ1/ROMK1. Forms a trimeric complex with FBXW7 and NOTCH1 Associates with the mammalian target of rapamycin complex 2 (mTORC2) via an interaction with MAPKAP1/SIN1. In terms of processing, regulated by phosphorylation. Activated by phosphorylation on Ser-422 by mTORC2, transforming it into a substrate for PDPK1 which phosphorylates it on Thr-256. Phosphorylation on Ser-397 and Ser-401 are also essential for its activity. Phosphorylation on Ser-78 by MAPK7 is required for growth factor-induced cell cycle progression. Ubiquitinated by NEDD4L; which promotes proteasomal degradation. Ubiquitinated by SYVN1 at the endoplasmic reticulum; which promotes rapid proteasomal degradation and maintains a high turnover rate in resting cells.

It is found in the cytoplasm. The protein resides in the nucleus. It localises to the endoplasmic reticulum membrane. The protein localises to the cell membrane. Its subcellular location is the mitochondrion. It catalyses the reaction L-seryl-[protein] + ATP = O-phospho-L-seryl-[protein] + ADP + H(+). It carries out the reaction L-threonyl-[protein] + ATP = O-phospho-L-threonyl-[protein] + ADP + H(+). Its activity is regulated as follows. Two specific sites, one in the kinase domain (Thr-256) and the other in the C-terminal regulatory region (Ser-422), need to be phosphorylated for its full activation. Phosphorylation at Ser-397 and Ser-401 are also essential for its activity. Activated by WNK1, WNK2, WNK3 and WNK4; which promote phosphorylation by mTORC2. Its function is as follows. Serine/threonine-protein kinase which is involved in the regulation of a wide variety of ion channels, membrane transporters, cellular enzymes, transcription factors, neuronal excitability, cell growth, proliferation, survival, migration and apoptosis. Plays an important role in cellular stress response. Contributes to regulation of renal Na(+) retention, renal K(+) elimination, salt appetite, gastric acid secretion, intestinal Na(+)/H(+) exchange and nutrient transport, insulin-dependent salt sensitivity of blood pressure, salt sensitivity of peripheral glucose uptake, cardiac repolarization and memory consolidation. Up-regulates Na(+) channels: SCNN1A/ENAC, SCN5A and ASIC1/ACCN2, K(+) channels: KCNJ1/ROMK1, KCNA1-5, KCNQ1-5 and KCNE1, epithelial Ca(2+) channels: TRPV5 and TRPV6, chloride channels: BSND, CLCN2 and CFTR, glutamate transporters: SLC1A3/EAAT1, SLC1A2 /EAAT2, SLC1A1/EAAT3, SLC1A6/EAAT4 and SLC1A7/EAAT5, amino acid transporters: SLC1A5/ASCT2, SLC38A1/SN1 and SLC6A19, creatine transporter: SLC6A8, Na(+)/dicarboxylate cotransporter: SLC13A2/NADC1, Na(+)-dependent phosphate cotransporter: SLC34A2/NAPI-2B, glutamate receptor: GRIK2/GLUR6. Up-regulates carriers: SLC9A3/NHE3, SLC12A1/NKCC2, SLC12A3/NCC, SLC5A3/SMIT, SLC2A1/GLUT1, SLC5A1/SGLT1 and SLC15A2/PEPT2. Regulates enzymes: GSK3A/B, PMM2 and Na(+)/K(+) ATPase, and transcription factors: CTNNB1 and nuclear factor NF-kappa-B. Stimulates sodium transport into epithelial cells by enhancing the stability and expression of SCNN1A/ENAC. This is achieved by phosphorylating the NEDD4L ubiquitin E3 ligase, promoting its interaction with 14-3-3 proteins, thereby preventing it from binding to SCNN1A/ENAC and targeting it for degradation. Regulates store-operated Ca(+2) entry (SOCE) by stimulating ORAI1 and STIM1. Regulates KCNJ1/ROMK1 directly via its phosphorylation or indirectly via increased interaction with SLC9A3R2/NHERF2. Phosphorylates MDM2 and activates MDM2-dependent ubiquitination of p53/TP53. Phosphorylates MAPT/TAU and mediates microtubule depolymerization and neurite formation in hippocampal neurons. Phosphorylates SLC2A4/GLUT4 and up-regulates its activity. Phosphorylates APBB1/FE65 and promotes its localization to the nucleus. Phosphorylates MAPK1/ERK2 and activates it by enhancing its interaction with MAP2K1/MEK1 and MAP2K2/MEK2. Phosphorylates FBXW7 and plays an inhibitory role in the NOTCH1 signaling. Phosphorylates FOXO1 resulting in its relocalization from the nucleus to the cytoplasm. Phosphorylates FOXO3, promoting its exit from the nucleus and interference with FOXO3-dependent transcription. Phosphorylates BRAF and MAP3K3/MEKK3 and inhibits their activity. Phosphorylates SLC9A3/NHE3 in response to dexamethasone, resulting in its activation and increased localization at the cell membrane. Phosphorylates CREB1. Necessary for vascular remodeling during angiogenesis. The sequence is that of Serine/threonine-protein kinase Sgk1 (Sgk1) from Mus musculus (Mouse).